A 782-amino-acid chain; its full sequence is uncharacterized protein (782 aa).

The zn(2)-C6 fungal-type DNA-binding region spans 22–50; sequence CRECHRLKLKCDRVWPCENCKKRGIPNLC. 2 disordered regions span residues 105-126 and 645-665; these read GEKPAEDTKDENRSQPIHDPDH and VPSSRPNSKSPDDSSMRAEKA. The span at 654–665 shows a compositional bias: basic and acidic residues; it reads SPDDSSMRAEKA.

It localises to the nucleus. This is an uncharacterized protein from Schizosaccharomyces pombe (strain 972 / ATCC 24843) (Fission yeast).